A 206-amino-acid polypeptide reads, in one-letter code: Large ribosomal subunit protein uL3 (206 aa).

Positions 122-154 (VVKRHGHAGGPGGHGSRFHRHPGSMGANSTPSR) are disordered.

Belongs to the universal ribosomal protein uL3 family. Part of the 50S ribosomal subunit. Forms a cluster with proteins L14 and L19.

In terms of biological role, one of the primary rRNA binding proteins, it binds directly near the 3'-end of the 23S rRNA, where it nucleates assembly of the 50S subunit. This chain is Large ribosomal subunit protein uL3, found in Leptospira borgpetersenii serovar Hardjo-bovis (strain JB197).